Consider the following 147-residue polypeptide: Deoxyuridine 5'-triphosphate nucleotidohydrolase (147 aa).

Substrate-binding positions include arginine 63 to glycine 65, asparagine 76, and threonine 80 to aspartate 82.

The protein belongs to the dUTPase family. Requires Mg(2+) as cofactor.

The enzyme catalyses dUTP + H2O = dUMP + diphosphate + H(+). The protein operates within pyrimidine metabolism; dUMP biosynthesis; dUMP from dCTP (dUTP route): step 2/2. Its function is as follows. This enzyme is involved in nucleotide metabolism: it produces dUMP, the immediate precursor of thymidine nucleotides and it decreases the intracellular concentration of dUTP so that uracil cannot be incorporated into DNA. This Chlamydia abortus (strain DSM 27085 / S26/3) (Chlamydophila abortus) protein is Deoxyuridine 5'-triphosphate nucleotidohydrolase.